Here is a 681-residue protein sequence, read N- to C-terminus: Calpain-C (681 aa).

The region spanning 18–331 (LWEDPDFPAV…FSTMEVVYLD (314 aa)) is the Calpain catalytic domain. The segment at 332-481 (TETSNDEEML…ILGTGSFRLS (150 aa)) is domain III. The tract at residues 482–514 (CLETQTMILLDPFPALKSTDAERCGGPKVKSVC) is linker. The segment at 515-681 (QYEPVYMQLA…HDWIKSILSC (167 aa)) is domain IV. The EF-hand domain occupies 552–587 (ANIDICRQVIALQDRSGSGRITFQQFKTFMVNLKSW). Asp-565, Ser-567, Ser-569, and Arg-571 together coordinate Ca(2+).

It belongs to the peptidase C2 family. As to expression, localized to the salivary glands in the larva.

The protein resides in the cytoplasm. Its function is as follows. Not known; does not seem to have protease activity. The protein is Calpain-C of Drosophila melanogaster (Fruit fly).